Here is a 398-residue protein sequence, read N- to C-terminus: Ubiquitin-like modifier-activating enzyme 5 (398 aa).

Residues glycine 76, aspartate 97, lysine 120, asparagine 143, and asparagine 177 each contribute to the ATP site. Cysteine 219 and cysteine 222 together coordinate Zn(2+). Cysteine 243 functions as the Glycyl thioester intermediate in the catalytic mechanism. Zn(2+) contacts are provided by cysteine 296 and cysteine 301.

It belongs to the ubiquitin-activating E1 family. UBA5 subfamily.

In terms of biological role, E1-like enzyme which activates UFM1. In Drosophila grimshawi (Hawaiian fruit fly), this protein is Ubiquitin-like modifier-activating enzyme 5.